Here is an 832-residue protein sequence, read N- to C-terminus: Protein P (832 aa).

The tract at residues 1–177 is terminal protein domain (TP); it reads MPLSYQHFRK…FCGSPYSWEQ (177 aa). Residues 178 to 335 are spacer; sequence ELQHGAESFH…YCLSHLVSLL (158 aa). Residues 336–679 are polymerase/reverse transcriptase domain (RT); the sequence is DDWGPCTEHG…YSTLYPVARQ (344 aa). Residues 346–589 form the Reverse transcriptase domain; sequence EHHIRIPRTP…YSLHFMGYVI (244 aa). Positions 418, 540, and 541 each coordinate Mg(2+).

The protein belongs to the hepadnaviridae P protein family.

The enzyme catalyses DNA(n) + a 2'-deoxyribonucleoside 5'-triphosphate = DNA(n+1) + diphosphate. It catalyses the reaction Endonucleolytic cleavage to 5'-phosphomonoester.. With respect to regulation, activated by host HSP70 and HSP40 in vitro to be able to bind the epsilon loop of the pgRNA. Because deletion of the RNase H region renders the protein partly chaperone-independent, the chaperones may be needed indirectly to relieve occlusion of the RNA-binding site by this domain. Inhibited by several reverse-transcriptase inhibitors: Lamivudine, Adefovir and Entecavir. In terms of biological role, multifunctional enzyme that converts the viral RNA genome into dsDNA in viral cytoplasmic capsids. This enzyme displays a DNA polymerase activity that can copy either DNA or RNA templates, and a ribonuclease H (RNase H) activity that cleaves the RNA strand of RNA-DNA heteroduplexes in a partially processive 3'- to 5'-endonucleasic mode. Neo-synthesized pregenomic RNA (pgRNA) are encapsidated together with the P protein, and reverse-transcribed inside the nucleocapsid. Initiation of reverse-transcription occurs first by binding the epsilon loop on the pgRNA genome, and is initiated by protein priming, thereby the 5'-end of (-)DNA is covalently linked to P protein. Partial (+)DNA is synthesized from the (-)DNA template and generates the relaxed circular DNA (RC-DNA) genome. After budding and infection, the RC-DNA migrates in the nucleus, and is converted into a plasmid-like covalently closed circular DNA (cccDNA). The activity of P protein does not seem to be necessary for cccDNA generation, and is presumably released from (+)DNA by host nuclear DNA repair machinery. The sequence is that of Protein P from Pan troglodytes (Chimpanzee).